Here is a 102-residue protein sequence, read N- to C-terminus: Putative toxin YafQ (102 aa).

This sequence belongs to the RelE toxin family. YafQ subfamily.

Toxic component of a type II toxin-antitoxin (TA) system. Its cognate antitoxin is RelB. This is Putative toxin YafQ from Haemophilus influenzae (strain ATCC 51907 / DSM 11121 / KW20 / Rd).